Reading from the N-terminus, the 132-residue chain is Translation initiation factor 5A (132 aa).

The residue at position 36 (Lys36) is a Hypusine.

Belongs to the eIF-5A family.

It is found in the cytoplasm. Its function is as follows. Functions by promoting the formation of the first peptide bond. The polypeptide is Translation initiation factor 5A (eIF5A) (Pyrobaculum islandicum (strain DSM 4184 / JCM 9189 / GEO3)).